The sequence spans 123 residues: Large ribosomal subunit protein bL17 (123 aa).

Belongs to the bacterial ribosomal protein bL17 family. As to quaternary structure, part of the 50S ribosomal subunit. Contacts protein L32.

The chain is Large ribosomal subunit protein bL17 from Exiguobacterium sibiricum (strain DSM 17290 / CCUG 55495 / CIP 109462 / JCM 13490 / 255-15).